A 171-amino-acid polypeptide reads, in one-letter code: NADH-quinone oxidoreductase subunit I 2 (171 aa).

2 4Fe-4S ferredoxin-type domains span residues 39–71 and 81–110; these read IVLTRDPDGQERCVACNLCAVACPVGCIDLSKA and EHFRINFARCIFCGYCEEACPTAAIQLTPD. Residues C51, C54, C57, C61, C90, C93, C96, and C100 each coordinate [4Fe-4S] cluster.

It belongs to the complex I 23 kDa subunit family. NDH-1 is composed of 14 different subunits. Subunits NuoA, H, J, K, L, M, N constitute the membrane sector of the complex. [4Fe-4S] cluster is required as a cofactor.

The protein resides in the cell inner membrane. The catalysed reaction is a quinone + NADH + 5 H(+)(in) = a quinol + NAD(+) + 4 H(+)(out). Functionally, NDH-1 shuttles electrons from NADH, via FMN and iron-sulfur (Fe-S) centers, to quinones in the respiratory chain. The immediate electron acceptor for the enzyme in this species is believed to be ubiquinone. Couples the redox reaction to proton translocation (for every two electrons transferred, four hydrogen ions are translocated across the cytoplasmic membrane), and thus conserves the redox energy in a proton gradient. The chain is NADH-quinone oxidoreductase subunit I 2 from Rhodopseudomonas palustris (strain BisB18).